The following is a 315-amino-acid chain: Eukaryotic translation initiation factor 2 subunit 1 (315 aa).

The S1 motif domain occupies Glu-17–Arg-88. A Phosphoserine; by HRI modification is found at Ser-49. Ser-52 carries the phosphoserine modification. An N6-acetyllysine modification is found at Lys-141. The residue at position 158 (Ser-158) is a Phosphoserine. Residues Thr-279 and Thr-281 each carry the phosphothreonine modification. The interval Leu-293 to Asp-315 is disordered. Residues Glu-299 to Glu-308 are compositionally biased toward acidic residues.

The protein belongs to the eIF-2-alpha family. In terms of assembly, eukaryotic translation initiation factor 2 eIF2 is a heterotrimeric complex composed of an alpha (EIF2S1), a beta (EIF2S2) and a gamma (EIF2S3) chain. eIF2 is member of the 43S pre-initiation complex (43S PIC). eIF2 forms a complex with at least CELF1/CUGBP1, CALR, CALR3, EIF2S1, EIF2S2, HSP90B1 and HSPA5. Interaction with METAP2 protects EIF2S1 from inhibitory phosphorylation. Interacts with ABCF1. Associates with ribosomes. Interacts with DDX3X in an RNA-independent manner. In terms of processing, phosphorylation at Ser-49 and Ser-52 stabilizes the eIF-2/GDP/eIF2B complex and prevents GDP/GTP exchange reaction, thus impairing the recycling of eIF-2 between successive rounds of initiation and leading to global inhibition of translation, while concomitantly initiating the preferential translation of integrated stress response (ISR)-specific mRNAs. Substrate for at least 4 kinases: EIF2AK1/HRI, EIF2AK2/PKR, EIF2AK3/PERK and EIF2AK4/GCN2. Phosphorylation on Ser-52 by the EIF2AK4/GCN2 protein kinase occurs in response to amino acid starvation and UV irradiation. Phosphorylation at Ser-52 by the EIF2AK3/PERK protein kinase occurs in response to the unfolded protein response. Phosphorylation at Ser-52 by EIF2AK1/HRI in response to mitochondrial damage promotes relocalization to the mitochondrial surface.

It localises to the cytoplasm. The protein localises to the stress granule. Its subcellular location is the cytosol. It is found in the mitochondrion. Activity is regulated by phosphorylation at Ser-49 and Ser-52, which stabilizes the eIF2/GDP/eIF2B complex and prevents the eIF2B-mediated exchange of GDP for GTP, thereby preventing the formation of the 43S pre-initiation complex (43S PIC). This results in the global attenuation of 5' cap-dependent protein synthesis and concomitant translation of ISR-specific mRNAs that contain a short upstream open reading frame (uORF) in their 5' UTR, such as ATF4, ATF5, DDIT3/CHOP and PPP1R15A/GADD34. Member of the eIF2 complex that functions in the early steps of protein synthesis by forming a ternary complex with GTP and initiator tRNA. This complex binds to a 40S ribosomal subunit, followed by mRNA binding to form a 43S pre-initiation complex. Junction of the 60S ribosomal subunit to form the 80S initiation complex is preceded by hydrolysis of the GTP bound to eIF2 and release of an eIF2-GDP binary complex. In order for eIF2 to recycle and catalyze another round of initiation, the GDP bound to eIF2 must exchange with GTP by way of a reaction catalyzed by eIF2B. EIF2S1/eIF2-alpha is a key component of the integrated stress response (ISR), required for adaptation to various stress: phosphorylation by metabolic-stress sensing protein kinases (EIF2AK1/HRI, EIF2AK2/PKR, EIF2AK3/PERK and EIF2AK4/GCN2) in response to stress converts EIF2S1/eIF2-alpha in a global protein synthesis inhibitor, leading to a attenuation of cap-dependent translation, while concomitantly initiating the preferential translation of ISR-specific mRNAs, such as the transcriptional activators ATF4 and QRICH1, and hence allowing ATF4- and QRICH1-mediated reprogramming. EIF2S1/eIF2-alpha also acts as an activator of mitophagy in response to mitochondrial damage: phosphorylation by EIF2AK1/HRI promotes relocalization to the mitochondrial surface, thereby triggering PRKN-independent mitophagy. This is Eukaryotic translation initiation factor 2 subunit 1 (EIF2S1) from Pongo abelii (Sumatran orangutan).